The chain runs to 616 residues: Dihydroxy-acid dehydratase (616 aa).

D81 is a binding site for Mg(2+). Residue C122 coordinates [2Fe-2S] cluster. Positions 123 and 124 each coordinate Mg(2+). N6-carboxylysine is present on K124. C195 serves as a coordination point for [2Fe-2S] cluster. E491 is a binding site for Mg(2+). S517 serves as the catalytic Proton acceptor.

The protein belongs to the IlvD/Edd family. Homodimer. Requires [2Fe-2S] cluster as cofactor. It depends on Mg(2+) as a cofactor.

The enzyme catalyses (2R)-2,3-dihydroxy-3-methylbutanoate = 3-methyl-2-oxobutanoate + H2O. It catalyses the reaction (2R,3R)-2,3-dihydroxy-3-methylpentanoate = (S)-3-methyl-2-oxopentanoate + H2O. The protein operates within amino-acid biosynthesis; L-isoleucine biosynthesis; L-isoleucine from 2-oxobutanoate: step 3/4. It participates in amino-acid biosynthesis; L-valine biosynthesis; L-valine from pyruvate: step 3/4. Functionally, functions in the biosynthesis of branched-chain amino acids. Catalyzes the dehydration of (2R,3R)-2,3-dihydroxy-3-methylpentanoate (2,3-dihydroxy-3-methylvalerate) into 2-oxo-3-methylpentanoate (2-oxo-3-methylvalerate) and of (2R)-2,3-dihydroxy-3-methylbutanoate (2,3-dihydroxyisovalerate) into 2-oxo-3-methylbutanoate (2-oxoisovalerate), the penultimate precursor to L-isoleucine and L-valine, respectively. The sequence is that of Dihydroxy-acid dehydratase from Escherichia coli (strain K12 / MC4100 / BW2952).